The primary structure comprises 265 residues: Transcription factor Spi-B-like (265 aa).

The TAD1 (Acidic) stretch occupies residues 1 to 31; the sequence is MLTLEASQLDGPHPSYMFSDSSFYDLDSCKP. The tract at residues 42 to 63 is TAD2; that stretch reads AEPPTDPCAGWLELAEPGYEPF. The tract at residues 127 to 160 is disordered; the sequence is TPLSEDDDFPTDAPALEVSDSDSDENLSPGGSLD. The segment at residues 169 to 252 is a DNA-binding region (ETS); it reads LRLYQFLLGL…VKKKLTYQFG (84 aa).

The protein belongs to the ETS family.

Its subcellular location is the nucleus. Functionally, may act as a sequence specific transcriptional activator. The sequence is that of Transcription factor Spi-B-like from Paleosuchus palpebrosus (Cuvier's smooth-fronted caiman).